Reading from the N-terminus, the 276-residue chain is 2-dehydro-3-deoxyphosphooctonate aldolase (276 aa).

This sequence belongs to the KdsA family.

It localises to the cytoplasm. It carries out the reaction D-arabinose 5-phosphate + phosphoenolpyruvate + H2O = 3-deoxy-alpha-D-manno-2-octulosonate-8-phosphate + phosphate. It participates in carbohydrate biosynthesis; 3-deoxy-D-manno-octulosonate biosynthesis; 3-deoxy-D-manno-octulosonate from D-ribulose 5-phosphate: step 2/3. The protein operates within bacterial outer membrane biogenesis; lipopolysaccharide biosynthesis. The sequence is that of 2-dehydro-3-deoxyphosphooctonate aldolase from Helicobacter pylori (strain Shi470).